The chain runs to 37 residues: Mating pheromone Er-22 (37 aa).

Disulfide bonds link Cys-3–Cys-18, Cys-10–Cys-32, and Cys-15–Cys-24.

Its subcellular location is the secreted. Mating ciliate pheromones (or gamones) are diffusible extracellular communication signals that distinguish different intraspecific classes of cells commonly referred to as 'mating types'. They prepare the latter for conjugation by changing their cell surface properties. The polypeptide is Mating pheromone Er-22 (MAT22) (Euplotes raikovi).